A 37-amino-acid chain; its full sequence is Delta-amaurobitoxin-Pl1b (37 aa).

4 cysteine pairs are disulfide-bonded: C2-C18, C9-C23, C17-C33, and C25-C31. At S37 the chain carries Serine amide.

It belongs to the neurotoxin 07 (Beta/delta-agtx) family. 02 (aga-3) subfamily. As to expression, expressed by the venom gland.

The protein resides in the secreted. In terms of biological role, insecticidal toxin. Binds to site 4 of insect voltage-gated sodium channel (Nav) and inhibits channel inactivation. In vivo, it lethal to lepidopteran larvae. Has no adverse affects when intracerebroventricularly injected in mice at a dose of 0.2 ug, but causes reversible paralysis of legs when injected intracerebroventricularly in mice at a dose of 2.0 ug. The protein is Delta-amaurobitoxin-Pl1b of Pireneitega luctuosa (Tangled nest spider).